A 295-amino-acid chain; its full sequence is Putative aquaporin-12B (295 aa).

At 1–22 the chain is on the cytoplasmic side; the sequence is MAGLNVSLSFFFATFTLCEAAR. A helical membrane pass occupies residues 23–41; that stretch reads RASKALLPVGAYEVFAREA. At 42 to 55 the chain is on the extracellular side; sequence MRTLVELGPWAGDF. Residues 56-74 traverse the membrane as a helical segment; that stretch reads GPDLLLTLLFLLFLAHGVT. At 75-76 the chain is on the cytoplasmic side; the sequence is LD. An intramembrane region (discontinuously helical) is located at residues 77-114; it reads GASANPTVSLQEFLMAEESLPGTLLKLAAQGLGMQAAC. The NPA 1 motif lies at 81–83; the sequence is NPT. At 115 to 120 the chain is on the cytoplasmic side; the sequence is TLTRLC. A helical membrane pass occupies residues 121-142; the sequence is WAWELSDLHLLQSLMAQSCSSA. Residues 143–145 are Extracellular-facing; that stretch reads LRT. A helical membrane pass occupies residues 146-166; the sequence is SVPHGALVEAACAFCFHLTLL. Topologically, residues 167 to 174 are cytoplasmic; sequence HLRHSPPA. The helical transmembrane segment at 175 to 191 threads the bilayer; sequence YSGPAVALLVTVTAYTA. The Extracellular portion of the chain corresponds to 192–194; that stretch reads GPF. Residues 195-206 constitute an intramembrane region (discontinuously helical); that stretch reads TSAFFNPALAAS. Residues 200–202 carry the NPA 2 motif; sequence NPA. At 207 to 223 the chain is on the extracellular side; that stretch reads VTFACSGHTLLEYVQVY. A helical membrane pass occupies residues 224–244; the sequence is WLGPLTGMVLAVLLHQGRLPH. Residues 245–295 are Cytoplasmic-facing; the sequence is LFQRNLFYGQKNKYRAPRGKPAPASGDTQTPAKGSSVREPGRSGVEGPHSS. A disordered region spans residues 257–295; the sequence is KYRAPRGKPAPASGDTQTPAKGSSVREPGRSGVEGPHSS.

It belongs to the MIP/aquaporin (TC 1.A.8) family. AQP11/AQP12 subfamily. As to quaternary structure, homotetramer; each monomer provides an independent water pore.

It localises to the membrane. The catalysed reaction is H2O(in) = H2O(out). In terms of biological role, putative aquaporin. Could form homotetrameric transmembrane channels, with each monomer independently mediating water transport across the plasma membrane along its osmotic gradient. The polypeptide is Putative aquaporin-12B (Homo sapiens (Human)).